Consider the following 138-residue polypeptide: MRLSSMWLCSLLLILKLQLSSTYPISTGLTDTDMDILKVLLSRLEESVSEQMAVDQSAPGQRDLLDSLSTEDAGDGPQPDAGLDEAEIREFLSAKNLKSVRNDSSRRSSGCFGRRMDRIGSMSSLGCNTVGRYNPKQR.

The signal sequence occupies residues 1–22 (MRLSSMWLCSLLLILKLQLSST). Disordered stretches follow at residues 50–84 (EQMAVDQSAPGQRDLLDSLSTEDAGDGPQPDAGLD) and 99–138 (SVRNDSSRRSSGCFGRRMDRIGSMSSLGCNTVGRYNPKQR). C111 and C127 are disulfide-bonded.

The protein belongs to the natriuretic peptide family.

It is found in the secreted. Its function is as follows. Cardiac hormone which may function as a paracrine antifibrotic factor in the heart. Also plays a key role in cardiovascular homeostasis through natriuresis, diuresis, vasorelaxation, and inhibition of renin and aldosterone secretion. The sequence is that of Brain natriuretic peptide (nppb) from Oreochromis mossambicus (Mozambique tilapia).